Reading from the N-terminus, the 744-residue chain is Prestin (744 aa).

The Cytoplasmic segment spans residues 1–75 (MDHAEENEIP…PITKWLPAYK (75 aa)). A helical membrane pass occupies residues 76–105 (FKEYVLGDLVSGISTGVLQLPQGLAFAMLA). The Extracellular portion of the chain corresponds to 106 to 108 (AVP). The helical transmembrane segment at 109 to 126 (PVFGLYSSFYPVIMYCFF) threads the bilayer. At 127 to 137 (GTSRHISIGPF) the chain is on the cytoplasmic side. A helical transmembrane segment spans residues 138–151 (AVISLMIGGVAVRL). The Extracellular segment spans residues 152-168 (VPDDIVIPGGVNATNGT). An Involved in motor function motif is present at residues 158–168 (IPGGVNATNGT). Residues Asn-163 and Asn-166 are each glycosylated (N-linked (GlcNAc...) asparagine). A helical transmembrane segment spans residues 169–196 (EARDALRVKVAMSVTLLSGIIQFCLGVC). Residues 197 to 206 (RFGFVAIYLT) lie on the Cytoplasmic side of the membrane. A helical membrane pass occupies residues 207 to 230 (EPLVRGFTTAAAVHVFTSMLKYLF). The Extracellular portion of the chain corresponds to 231-241 (GVKTKRYSGIF). An intramembrane region (helical) is located at residues 242–253 (SVVYSTVAVLQN). The Extracellular segment spans residues 254-258 (VKNLN). Residues 259–282 (VCSLGVGLMVFGLLLGGKEFNERF) traverse the membrane as a helical segment. The Cytoplasmic segment spans residues 283-291 (KEKLPAPIP). Residues 292–307 (LEFFAVVMGTGISAGF) form a helical membrane-spanning segment. At 308–332 (NLHESYSVDVVGTLPLGLLPPANPD) the chain is on the extracellular side. Residues 333–367 (TSLFHLVYVDAIAIAIVGFSVTISMAKTLANKHGY) traverse the membrane as a helical segment. Over 368 to 370 (QVD) the chain is Cytoplasmic. The helical transmembrane segment at 371–388 (GNQELIALGICNSIGSLF) threads the bilayer. Topologically, residues 389–396 (QTFSISCS) are extracellular. Residues 397–406 (LSRSLVQEGT) traverse the membrane as a helical segment. Ser-398 lines the salicylate pocket. Topologically, residues 407 to 410 (GGKT) are cytoplasmic. Residues 411 to 432 (QLAGCLASLMILLVILATGFLF) form a helical membrane-spanning segment. Over 433 to 436 (ESLP) the chain is Extracellular. Residues 437 to 464 (QAVLSAIVIVNLKGMFMQFSDLPFFWRT) form a helical membrane-spanning segment. Residue Ser-465 is a topological domain, cytoplasmic. A helical transmembrane segment spans residues 466–481 (KIELTIWLTTFVSSLF). Topologically, residues 482-483 (LG) are extracellular. The helical transmembrane segment at 484 to 504 (LDYGLITAVIIALLTVIYRTQ) threads the bilayer. The interval 505–718 (SPSYKVLGQL…AVLGSQVREA (214 aa)) is extended region for STAS domain. The Cytoplasmic segment spans residues 505–744 (SPSYKVLGQL…PNATPTTPEA (240 aa)). In terms of domain architecture, STAS spans 525 to 713 (AYEEVKEIPG…HSIHDAVLGS (189 aa)). Residues 720–744 (AEQEATASLPQEDMEPNATPTTPEA) are disordered.

The protein belongs to the SLC26A/SulP transporter (TC 2.A.53) family. In terms of assembly, homodimer. Interacts (via STAS domain) with CALM; this interaction is calcium-dependent and the STAS domain interacts with only one lobe of CALM which is an elongated conformation. Interacts with MYH1. Expressed in the outer hair cells (OHC) of the organ of Corti of the inner ear. Also weak expression in brain and testis. Very weakly expressed in heart, spleen, muscle and lactating mammary glands. Expressed in cardiac myocytes (at protein level), both in the surface sarcolemma and along the t-tubule. Weakly expressed in skeletal muscle cells (at protein level).

Its subcellular location is the lateral cell membrane. It carries out the reaction 2 hydrogencarbonate(in) + chloride(out) = 2 hydrogencarbonate(out) + chloride(in). In terms of biological role, voltage-sensitive motor protein that drives outer hair cell (OHC) electromotility (eM) and participates in sound amplification in the hearing organ. Converts changes in the transmembrane electric potential into mechanical displacements resulting in the coupling of its expansion to movement of a charged voltage sensor across the lipid membrane. The nature of the voltage sensor is not completely clear, and two models compete. In the first model, acts as an incomplete transporter where intracellular chloride anion acts as extrinsic voltage sensor that drives conformational change in the protein which is sufficient to produce a length change in the plane of the membrane and hence in the length of the OHC. The second model in which multiple charged amino acid residues are distributed at the intracellular and extracellular membrane interfaces that form an intrinsic voltage sensor, whose movement produces the non-linear capacitance (NLC). However, the effective voltage sensor may be the result of a hybrid voltage sensor, assembled from intrinsic charge (charged residues) and extrinsic charge (bound anion). Notably, binding of anions to the anion-binding pocket partially neutralizes the intrinsic positive charge rather than to form an electrically negative sensor, therefore remaining charge may serve as voltage sensor that, after depolarization, moves from down (expanded state) to up (contracted) conformation, which is accompanied by an eccentric contraction of the intermembrane cross-sectional area of the protein as well as a major increase in the hydrophobic thickness of the protein having as consequences the plasma membrane thickening and the cell contraction after membrane depolarization. The anion-binding pocket transits from the inward-open (Down) state, where it is exposed toward the intracellular solvent in the absence of anion, to the occluded (Up) state upon anion binding. Salicylate competes for the anion-binding site and inhibits the voltage-sensor movement, and therefore inhibits the charge transfer and electromotility by displacing Cl(-) from the anion-binding site and by preventing the structural transitions to the contracted state. In addition, can act as a weak Cl(-)/HCO3(-) antiporter across the cell membrane and so regulate the intracellular pH of the outer hair cells (OHCs), while firstly found as being unable to mediate electrogenic anion transport. Moreover, supports a role in cardiac mechanical amplification serving as an elastic element to enhance the actomyosin- based sarcomere contraction system. This is Prestin from Mus musculus (Mouse).